We begin with the raw amino-acid sequence, 77 residues long: uncharacterized protein (77 aa).

This is an uncharacterized protein from Orgyia pseudotsugata multicapsid polyhedrosis virus (OpMNPV).